The primary structure comprises 125 residues: Large ribosomal subunit protein uL30 (125 aa).

The tract at residues 1–61 is large ribosomal subunit protein uL30; sequence MSKLKVKLLR…HLVGVAYRID (61 aa). Positions 62 to 125 are unknown; the sequence is FSGDIPTVER…KNWKGEEVEL (64 aa).

This sequence belongs to the universal ribosomal protein uL30 family. As to quaternary structure, part of the 50S ribosomal subunit.

The sequence is that of Large ribosomal subunit protein uL30 from Aquifex aeolicus (strain VF5).